Reading from the N-terminus, the 402-residue chain is Plasminogen activator inhibitor 1 (402 aa).

A signal peptide spans Met-1–Ala-23. 3 N-linked (GlcNAc...) asparagine glycosylation sites follow: Asn-232, Asn-288, and Asn-352.

Belongs to the serpin family. In terms of assembly, forms a heterodimer with TMPRSS7. Interacts with VTN. Binds LRP1B; binding is followed by internalization and degradation. Interacts with PPP1CB. In complex with PLAU/uPA, interacts with PLAUR/uPAR. Interacts with SORL1 and LRP1, either alone or in complex with PLAU; these interactions are abolished in the presence of LRPAP1/RAP. The ternary complex composed of PLAUR-PLAU-PAI1 also interacts with SORL1. Interacts with PLAT/tPA. Also interacts with SORL1, when complexed to PLAT/tPA. In terms of processing, inactivated by proteolytic attack of the urokinase-type (u-PA) and the tissue-type (TPA), cleaving the 369-Arg-|-Met-370 bond. As to expression, expressed in endothelial cells. Found in plasma, platelets, and hepatoma and fibrosarcoma cells.

Its subcellular location is the secreted. Its function is as follows. Serine protease inhibitor. Inhibits TMPRSS7. Is a primary inhibitor of tissue-type plasminogen activator (PLAT) and urokinase-type plasminogen activator (PLAU). As PLAT inhibitor, it is required for fibrinolysis down-regulation and is responsible for the controlled degradation of blood clots. As PLAU inhibitor, it is involved in the regulation of cell adhesion and spreading. Acts as a regulator of cell migration, independently of its role as protease inhibitor. It is required for stimulation of keratinocyte migration during cutaneous injury repair. It is involved in cellular and replicative senescence. Plays a role in alveolar type 2 cells senescence in the lung. Is involved in the regulation of cementogenic differentiation of periodontal ligament stem cells, and regulates odontoblast differentiation and dentin formation during odontogenesis. This is Plasminogen activator inhibitor 1 (SERPINE1) from Homo sapiens (Human).